A 1163-amino-acid polypeptide reads, in one-letter code: Guanylate cyclase 32E (1163 aa).

Positions 1–25 are cleaved as a signal peptide; sequence MPGPCASAAAFSCILVLLLLGCQRS. Topologically, residues 29–469 are extracellular; sequence AAGATVSSMR…LCPRKKLDWR (441 aa). N-linked (GlcNAc...) asparagine glycans are attached at residues N147, N206, N368, and N390. Residues 470–490 traverse the membrane as a helical segment; the sequence is YLVSGPLCALVVVVAIALLIK. Over 491 to 1163 the chain is Cytoplasmic; the sequence is HYRYEQTLAG…RSAPSITFRL (673 aa). In terms of domain architecture, Protein kinase spans 507–800; the sequence is MKDVTVINLG…IRLVRMHLKE (294 aa). The 131-residue stretch at 873 to 1003 folds into the Guanylate cyclase domain; the sequence is TILFSDIVGF…DTVNTASRME (131 aa).

It belongs to the adenylyl cyclase class-4/guanylyl cyclase family.

It is found in the membrane. The catalysed reaction is GTP = 3',5'-cyclic GMP + diphosphate. In Drosophila melanogaster (Fruit fly), this protein is Guanylate cyclase 32E (Gyc32E).